A 492-amino-acid polypeptide reads, in one-letter code: Catalase isozyme 3 (492 aa).

Active-site residues include histidine 65 and asparagine 138. Tyrosine 347 lines the heme pocket.

This sequence belongs to the catalase family. As to quaternary structure, homotetramer. The cofactor is heme. In terms of tissue distribution, abundant in green cotyledons, etiolated cotyledons, green hypocotyl and root, but not in young leaf.

It localises to the peroxisome. The catalysed reaction is 2 H2O2 = O2 + 2 H2O. Its function is as follows. Occurs in almost all aerobically respiring organisms and serves to protect cells from the toxic effects of hydrogen peroxide. The protein is Catalase isozyme 3 (CAT3) of Cucurbita pepo (Vegetable marrow).